Reading from the N-terminus, the 1235-residue chain is Ubiquitin carboxyl-terminal hydrolase 40 (1235 aa).

The 442-residue stretch at 41–482 (SGIRNQGGTC…SAYMLFYRKS (442 aa)) folds into the USP domain. Catalysis depends on Cys50, which acts as the Nucleophile. His305 functions as the Proton acceptor in the catalytic mechanism. Residues 1180–1190 (IRDDTGKEKQK) are compositionally biased toward basic and acidic residues. The tract at residues 1180–1235 (IRDDTGKEKQKQRALGRRKSQEALHEQSSYILSSAETPARPRAPETSLSIHVGSFR) is disordered. Residues 1205 to 1215 (EQSSYILSSAE) are compositionally biased toward polar residues.

It belongs to the peptidase C19 family. In terms of tissue distribution, broadly expressed.

The enzyme catalyses Thiol-dependent hydrolysis of ester, thioester, amide, peptide and isopeptide bonds formed by the C-terminal Gly of ubiquitin (a 76-residue protein attached to proteins as an intracellular targeting signal).. In terms of biological role, may be catalytically inactive. This chain is Ubiquitin carboxyl-terminal hydrolase 40 (USP40), found in Homo sapiens (Human).